Consider the following 262-residue polypeptide: Hydroxyethylthiazole kinase (262 aa).

Residue Met-50 participates in substrate binding. The ATP site is built by Arg-125 and Thr-171. Gly-198 is a binding site for substrate.

The protein belongs to the Thz kinase family. Mg(2+) serves as cofactor.

It carries out the reaction 5-(2-hydroxyethyl)-4-methylthiazole + ATP = 4-methyl-5-(2-phosphooxyethyl)-thiazole + ADP + H(+). It functions in the pathway cofactor biosynthesis; thiamine diphosphate biosynthesis; 4-methyl-5-(2-phosphoethyl)-thiazole from 5-(2-hydroxyethyl)-4-methylthiazole: step 1/1. Functionally, catalyzes the phosphorylation of the hydroxyl group of 4-methyl-5-beta-hydroxyethylthiazole (THZ). This is Hydroxyethylthiazole kinase from Escherichia coli O157:H7.